Consider the following 262-residue polypeptide: Alpha/beta-gliadin A-I (262 aa).

The first 20 residues, 1-20, serve as a signal peptide directing secretion; sequence MKTFLILALLAIVATTATTA. Disordered regions lie at residues 51–73, 87–120, and 225–251; these read LGQQ…PSQQ, PYSQ…QQQQ, and YPLG…QQLP. Pro residues-rich tracts occupy residues 56 to 71 and 93 to 104; these read PFPP…PFPS and PFRPQQPYPQPQ. A compositionally biased stretch (low complexity) spans 105–120; sequence PQYSQPQQPISQQQQQ. Residues 232–251 are compositionally biased toward polar residues; sequence FRPSQQNPQAQGSVQPQQLP.

The protein belongs to the gliadin/glutenin family. Post-translationally, substrate of transglutaminase.

Gliadin is the major seed storage protein in wheat. This chain is Alpha/beta-gliadin A-I, found in Triticum aestivum (Wheat).